The primary structure comprises 514 residues: NAD(P)H-quinone oxidoreductase subunit 2 (514 aa).

The next 14 membrane-spanning stretches (helical) occupy residues 16-36, 43-63, 80-100, 110-130, 133-153, 168-188, 211-231, 245-265, 279-299, 307-327, 335-355, 379-399, 411-431, and 467-487; these read IWPEGIIIITLMVILIGDLIV, WLPYVAIAGLLAAVVALYFEW, LSIVFRAIVALSTTVTILMSV, LAEFIAIMLTATLGGMFLSGA, LVMIFISLEMLSISSYLMTGY, LLIGASSSAIFLYGVSLLYGL, LGLAIALVFVIAGIAFKISAV, PTPVVAFLSVGSKAAGFALAI, WHFIFTALAILSMVLGNVVAL, MLAYSSIGQAGFVMIGLTANS, IFYLLIYLFMNLGAFICIILF, LGLSICLLSLGGIPPLAGFFG, GLYGLVLLGLVTSVISIYYYI, and VGLVLSVIATSLAGILSNPLF.

The protein belongs to the complex I subunit 2 family. In terms of assembly, NDH-1 can be composed of about 15 different subunits; different subcomplexes with different compositions have been identified which probably have different functions.

It is found in the cellular thylakoid membrane. It catalyses the reaction a plastoquinone + NADH + (n+1) H(+)(in) = a plastoquinol + NAD(+) + n H(+)(out). The enzyme catalyses a plastoquinone + NADPH + (n+1) H(+)(in) = a plastoquinol + NADP(+) + n H(+)(out). Functionally, NDH-1 shuttles electrons from an unknown electron donor, via FMN and iron-sulfur (Fe-S) centers, to quinones in the respiratory and/or the photosynthetic chain. The immediate electron acceptor for the enzyme in this species is believed to be plastoquinone. Couples the redox reaction to proton translocation, and thus conserves the redox energy in a proton gradient. Cyanobacterial NDH-1 also plays a role in inorganic carbon-concentration. The sequence is that of NAD(P)H-quinone oxidoreductase subunit 2 from Gloeothece citriformis (strain PCC 7424) (Cyanothece sp. (strain PCC 7424)).